Consider the following 211-residue polypeptide: Ribosome maturation factor RimM (211 aa).

Residues 111–182 (PDAWYDHQLV…TLVITPPLGL (72 aa)) form the PRC barrel domain. The disordered stretch occupies residues 184-211 (EEIPDEQPTPSATSDAEPGSAPEGDDAR).

This sequence belongs to the RimM family. Binds ribosomal protein uS19.

The protein resides in the cytoplasm. Functionally, an accessory protein needed during the final step in the assembly of 30S ribosomal subunit, possibly for assembly of the head region. Essential for efficient processing of 16S rRNA. May be needed both before and after RbfA during the maturation of 16S rRNA. It has affinity for free ribosomal 30S subunits but not for 70S ribosomes. In Clavibacter sepedonicus (Clavibacter michiganensis subsp. sepedonicus), this protein is Ribosome maturation factor RimM.